Consider the following 551-residue polypeptide: Tropolone cluster transcription factor tropK (551 aa).

Positions 1–21 are disordered; sequence MSVAIKMSTNTVGGQSTRQPP. Residues 7-20 are compositionally biased toward polar residues; the sequence is MSTNTVGGQSTRQP. A DNA-binding region (zn(2)-C6 fungal-type) is located at residues 25 to 52; it reads CLHCRNKKMKCDALQPRCKNCFNAGVEC.

The protein resides in the nucleus. Transcription factor that regulates the expression of the gene cluster that mediates the biosynthesis tropolone class of fungal maleic anhydrides, including stipitaldehydic, stipitatonic and stipitatic acids. The protein is Tropolone cluster transcription factor tropK of Talaromyces stipitatus (strain ATCC 10500 / CBS 375.48 / QM 6759 / NRRL 1006) (Penicillium stipitatum).